The sequence spans 457 residues: Argininosuccinate lyase (457 aa).

This sequence belongs to the lyase 1 family. Argininosuccinate lyase subfamily.

The protein resides in the cytoplasm. It catalyses the reaction 2-(N(omega)-L-arginino)succinate = fumarate + L-arginine. It participates in amino-acid biosynthesis; L-arginine biosynthesis; L-arginine from L-ornithine and carbamoyl phosphate: step 3/3. This is Argininosuccinate lyase from Aquifex aeolicus (strain VF5).